We begin with the raw amino-acid sequence, 518 residues long: GMP synthase [glutamine-hydrolyzing] (518 aa).

The region spanning 13–203 (KIIVLDFGSQ…ALNICGCKGD (191 aa)) is the Glutamine amidotransferase type-1 domain. Cys90 serves as the catalytic Nucleophile. Active-site residues include His177 and Glu179. The GMPS ATP-PPase domain occupies 204 to 393 (WTMENFSEVE…LGMPDAIVWR (190 aa)). 231-237 (SGGVDSS) is an ATP binding site.

In terms of assembly, homodimer.

The catalysed reaction is XMP + L-glutamine + ATP + H2O = GMP + L-glutamate + AMP + diphosphate + 2 H(+). Its pathway is purine metabolism; GMP biosynthesis; GMP from XMP (L-Gln route): step 1/1. Catalyzes the synthesis of GMP from XMP. The sequence is that of GMP synthase [glutamine-hydrolyzing] from Listeria innocua serovar 6a (strain ATCC BAA-680 / CLIP 11262).